The sequence spans 64 residues: uncharacterized protein (64 aa).

Residues 1-64 (MNNPNIVPPH…QNQPPQRPQY (64 aa)) are disordered. Over residues 8–32 (PPHFNQHQQQNHNQNQPPHHMNNPN) the composition is skewed to low complexity.

This is an uncharacterized protein from Dictyostelium discoideum (Social amoeba).